Consider the following 87-residue polypeptide: Retinal rod rhodopsin-sensitive cGMP 3',5'-cyclic phosphodiesterase subunit gamma (87 aa).

N-acetylmethionine is present on M1. Over residues 1–12 (MNLEPPKAEIRS) the composition is skewed to basic and acidic residues. A disordered region spans residues 1-55 (MNLEPPKAEIRSATRVMGGPVTPRKGPPKFKQRQTRQFKSKPPKKGVQGFGDDIP). Over residues 26 to 44 (GPPKFKQRQTRQFKSKPPK) the composition is skewed to basic residues.

This sequence belongs to the rod/cone cGMP-PDE gamma subunit family. In terms of assembly, oligomer composed of two catalytic chains (alpha and beta), an inhibitory chain (gamma) and the delta chain.

The enzyme catalyses 3',5'-cyclic GMP + H2O = GMP + H(+). Participates in processes of transmission and amplification of the visual signal. cGMP-PDEs are the effector molecules in G-protein-mediated phototransduction in vertebrate rods and cones. The polypeptide is Retinal rod rhodopsin-sensitive cGMP 3',5'-cyclic phosphodiesterase subunit gamma (PDE6G) (Bos taurus (Bovine)).